Reading from the N-terminus, the 151-residue chain is Small ribosomal subunit protein uS15 (151 aa).

A compositionally biased stretch (basic residues) spans 1–16 (MPHRSRHKKGRSRSVR). A disordered region spans residues 1–21 (MPHRSRHKKGRSRSVRPAHPT).

It belongs to the universal ribosomal protein uS15 family. In terms of assembly, part of the 30S ribosomal subunit.

The chain is Small ribosomal subunit protein uS15 from Pyrobaculum islandicum (strain DSM 4184 / JCM 9189 / GEO3).